We begin with the raw amino-acid sequence, 338 residues long: Tetraacyldisaccharide 4'-kinase (338 aa).

63 to 70 (TVGGSGKT) serves as a coordination point for ATP.

The protein belongs to the LpxK family.

The catalysed reaction is a lipid A disaccharide + ATP = a lipid IVA + ADP + H(+). The protein operates within glycolipid biosynthesis; lipid IV(A) biosynthesis; lipid IV(A) from (3R)-3-hydroxytetradecanoyl-[acyl-carrier-protein] and UDP-N-acetyl-alpha-D-glucosamine: step 6/6. Transfers the gamma-phosphate of ATP to the 4'-position of a tetraacyldisaccharide 1-phosphate intermediate (termed DS-1-P) to form tetraacyldisaccharide 1,4'-bis-phosphate (lipid IVA). This is Tetraacyldisaccharide 4'-kinase from Shewanella loihica (strain ATCC BAA-1088 / PV-4).